We begin with the raw amino-acid sequence, 265 residues long: Bidirectional sugar transporter NEC1 (265 aa).

At 1 to 8 (MAQLRADD) the chain is on the extracellular side. Residues 9–29 (LSFIFGLLGNIVSFMVFLAPV) traverse the membrane as a helical segment. The MtN3/slv 1 domain occupies 11 to 97 (FIFGLLGNIV…SLFLFYAPRK (87 aa)). At 30–44 (PTFYKIYKRKSSEGY) the chain is on the cytoplasmic side. The chain crosses the membrane as a helical span at residues 45–65 (QAIPYMVALFSAGLLLYYAYL). At 66 to 71 (RKNAYL) the chain is on the extracellular side. Residues 72 to 92 (IVSINGFGCAIELTYISLFLF) traverse the membrane as a helical segment. The Cytoplasmic portion of the chain corresponds to 93 to 103 (YAPRKSKIFTG). A helical transmembrane segment spans residues 104 to 124 (WLMLLELGALGMVMPITYLLA). Topologically, residues 125–130 (EGSHRV) are extracellular. Residues 131 to 151 (MIVGWICAAINVAVFAAPLSI) traverse the membrane as a helical segment. The 85-residue stretch at 132-216 (IVGWICAAIN…LLYFVYKDSK (85 aa)) folds into the MtN3/slv 2 domain. Over 152–164 (MRQVIKTKSVEFM) the chain is Cytoplasmic. The chain crosses the membrane as a helical span at residues 165–185 (PFTLSLFLTLCATMWFFYGFF). Over 186–190 (KKDFY) the chain is Extracellular. Residues 191–211 (IAFPNILGFLFGIVQMLLYFV) traverse the membrane as a helical segment. Residues 212 to 265 (YKDSKRIDDEKSDPVREATKSKEGVEIIINIEDDNSDNALQSMEKDFSRLRTSK) are Cytoplasmic-facing.

This sequence belongs to the SWEET sugar transporter family. Forms homooligomers and/or heterooligomers. In terms of tissue distribution, highly expressed in nectary tissue and weakly in the stamen, especially in stomium cells and in the upper part of the filaments.

It localises to the cell membrane. Mediates both low-affinity uptake and efflux of sugar across the plasma membrane. Promotes the formation of phloem bundles in mid-veins. Probably involved in the development of stomium cells that control anther opening time. Required for pollen viability. The chain is Bidirectional sugar transporter NEC1 (NEC1) from Petunia hybrida (Petunia).